We begin with the raw amino-acid sequence, 196 residues long: Protein GrpE (196 aa).

Positions 1–40 are disordered; sequence MSSKEQKTPEGQAPEEIIMDQHEEVEAVEPNDSAEQVDPR.

This sequence belongs to the GrpE family. In terms of assembly, homodimer.

It is found in the cytoplasm. Participates actively in the response to hyperosmotic and heat shock by preventing the aggregation of stress-denatured proteins, in association with DnaK and GrpE. It is the nucleotide exchange factor for DnaK and may function as a thermosensor. Unfolded proteins bind initially to DnaJ; upon interaction with the DnaJ-bound protein, DnaK hydrolyzes its bound ATP, resulting in the formation of a stable complex. GrpE releases ADP from DnaK; ATP binding to DnaK triggers the release of the substrate protein, thus completing the reaction cycle. Several rounds of ATP-dependent interactions between DnaJ, DnaK and GrpE are required for fully efficient folding. In Salmonella enteritidis PT4 (strain P125109), this protein is Protein GrpE.